We begin with the raw amino-acid sequence, 174 residues long: Co-chaperone protein HscB homolog (174 aa).

Residues 2 to 74 (NYFELFNLPV…IRRAEHMLAL (73 aa)) enclose the J domain.

It belongs to the HscB family. As to quaternary structure, interacts with HscA and stimulates its ATPase activity.

Its function is as follows. Co-chaperone involved in the maturation of iron-sulfur cluster-containing proteins. Seems to help targeting proteins to be folded toward HscA. This Shewanella amazonensis (strain ATCC BAA-1098 / SB2B) protein is Co-chaperone protein HscB homolog.